We begin with the raw amino-acid sequence, 836 residues long: Granulocyte colony-stimulating factor receptor (836 aa).

An N-terminal signal peptide occupies residues 1-24 (MARLGNCSLTWAALIILLLPGSLE). The 93-residue stretch at 25-117 (ECGHISVSAP…SLQILDQVEL (93 aa)) folds into the Ig-like C2-type domain. Residues 25-627 (ECGHISVSAP…TLTPEGSELH (603 aa)) are Extracellular-facing. 2 disulfides stabilise this stretch: C26–C52 and C46–C101. N-linked (GlcNAc...) asparagine glycans are attached at residues N51, N93, N128, and N134. 5 Fibronectin type-III domains span residues 125–230 (IPHN…LEPP), 233–332 (RTMD…TTER), 334–430 (PTVR…SRGP), 431–528 (ALTR…MAPS), and 530–623 (APEL…TPEG). 5 disulfide bridges follow: C131–C142, C167–C218, C177–C186, C248–C295, and C266–C309. The WSXWS motif signature appears at 318-322 (WSDWS). 4 N-linked (GlcNAc...) asparagine glycosylation sites follow: N389, N474, N579, and N610. A helical transmembrane segment spans residues 628-650 (IILGLFGLLLLLTCLCGTAWLCC). At 651-836 (SPNRKNPLWP…VHGMEALGSF (186 aa)) the chain is on the cytoplasmic side. The Box 1 motif motif lies at 658–666 (LWPSVPDPA).

The protein belongs to the type I cytokine receptor family. Type 2 subfamily. As to quaternary structure, homodimer. The dimeric receptor binds two CSF3 molecules. Interacts with CEACAM1; down-regulates the CSF3R-STAT3 pathway through recruitment of PTPN6 that dephosphorylates CSF3R. Post-translationally, N-glycosylated. One or several isoforms have been found in myelogenous leukemia cell line KG-1, leukemia U-937 cell line, in bone marrow cells, placenta, and peripheral blood granulocytes. Isoform GCSFR-2 is found only in leukemia U-937 cells. Isoform GCSFR-3 is highly expressed in placenta.

It is found in the secreted. The protein localises to the cell membrane. Its function is as follows. Receptor for granulocyte colony-stimulating factor (CSF3), essential for granulocytic maturation. Plays a crucial role in the proliferation, differentiation and survival of cells along the neutrophilic lineage. In addition it may function in some adhesion or recognition events at the cell surface. The chain is Granulocyte colony-stimulating factor receptor (CSF3R) from Homo sapiens (Human).